A 436-amino-acid polypeptide reads, in one-letter code: Immediate-early phosphoprotein 57 (436 aa).

The disordered stretch occupies residues 71–140 (VPKRERSKTP…TPSNQNPLTE (70 aa)). Residues 104-119 (QRPAPSARSRRPQPYS) are compositionally biased toward low complexity. Over residues 127 to 138 (KPQSTPSNQNPL) the composition is skewed to polar residues.

This sequence belongs to the herpesviridae UL69 family.

The protein localises to the host nucleus. Its subcellular location is the host cytoplasm. Functionally, acts at a post-transcriptional level to regulate viral gene expression. The sequence is that of Immediate-early phosphoprotein 57 (57) from Alcelaphine herpesvirus 1 (strain C500) (AlHV-1).